The primary structure comprises 226 residues: UPF0758 protein PSEEN5431 (226 aa).

One can recognise an MPN domain in the interval 102–224 (VMDNPLAVRR…PLSMIEHGWL (123 aa)). Residues histidine 173, histidine 175, and aspartate 186 each contribute to the Zn(2+) site. The JAMM motif signature appears at 173–186 (HNHPSGNCEPSQDD).

It belongs to the UPF0758 family.

This chain is UPF0758 protein PSEEN5431, found in Pseudomonas entomophila (strain L48).